Reading from the N-terminus, the 281-residue chain is 3-mercaptopyruvate sulfurtransferase (281 aa).

Rhodanese domains follow at residues 17-135 (DDPE…LLEE) and 165-278 (HENT…LPVE). Arginine 179 serves as a coordination point for substrate. Catalysis depends on cysteine 238, which acts as the Cysteine persulfide intermediate. The substrate specificity stretch occupies residues 238-244 (CGSGVTA).

Its subcellular location is the cytoplasm. It catalyses the reaction 2-oxo-3-sulfanylpropanoate + [thioredoxin]-dithiol = [thioredoxin]-disulfide + hydrogen sulfide + pyruvate + H(+). Functionally, catalyzes the transfer of sulfur from 3-mercaptopyruvate to a thiol-containing acceptor to form an intramolecular disulfide releasing hydrogen sulfide and pyruvate. This chain is 3-mercaptopyruvate sulfurtransferase (sseA), found in Escherichia coli O157:H7.